The chain runs to 1285 residues: Nuclear pore complex protein NUP133 (1285 aa).

Disordered regions lie at residues 1-53 and 522-580; these read MFSP…PAPW and EPPE…QTAR. The segment covering 31 to 41 has biased composition (polar residues); the sequence is TPATQNRNNFI. 2 stretches are compositionally biased toward basic and acidic residues: residues 523 to 544 and 553 to 569; these read PPER…DETR and TAGR…DKGN.

It belongs to the nucleoporin Nup133 family. As to quaternary structure, part of the nuclear pore complex (NPC). The NPC has an eight-fold symmetrical structure comprising a central transport channel and two rings, the cytoplasmic and nuclear rings, to which eight filaments are attached. The cytoplasmic filaments have loose ends, while the nuclear filaments are joined in a distal ring, forming a nuclear basket. NPCs are highly dynamic in configuration and composition, and can be devided in 3 subcomplexes, the NUP62 subcomplex, the NUP107-160 subcomplex and the NUP93 subcomplex, containing approximately 30 different nucleoporin proteins.

It is found in the nucleus envelope. It localises to the nucleus. The protein resides in the nuclear pore complex. The sequence is that of Nuclear pore complex protein NUP133 from Arabidopsis thaliana (Mouse-ear cress).